Consider the following 295-residue polypeptide: Spermatogenesis-associated protein 4 (295 aa).

A disordered region spans residues 1–34 (MAAAGQAEECLPLPAAESSKTSLPTPPAVPAGKK). One can recognise a Calponin-homology (CH) domain in the interval 48-154 (SRLSRSVLRW…QEIYTLLTHQ (107 aa)). Positions 251 to 295 (KRRYKSRGSKEKAAQPLSKSDNDGNARKEIHVKQSGNPCENTENL) are disordered. Residues 270 to 282 (SDNDGNARKEIHV) are compositionally biased toward basic and acidic residues. A compositionally biased stretch (polar residues) spans 284–295 (QSGNPCENTENL).

As to expression, testis.

The protein resides in the nucleus. Functionally, may play a role in apoptosis regulation. The protein is Spermatogenesis-associated protein 4 (Spata4) of Mus musculus (Mouse).